A 337-amino-acid polypeptide reads, in one-letter code: Exopolysaccharide phosphotransferase cps2G (337 aa).

The protein belongs to the stealth family.

This chain is Exopolysaccharide phosphotransferase cps2G (cps2G), found in Lactiplantibacillus plantarum (strain ATCC BAA-793 / NCIMB 8826 / WCFS1) (Lactobacillus plantarum).